The following is a 305-amino-acid chain: tRNA pseudouridine synthase B (305 aa).

The active-site Nucleophile is aspartate 41.

The protein belongs to the pseudouridine synthase TruB family. Type 1 subfamily.

The catalysed reaction is uridine(55) in tRNA = pseudouridine(55) in tRNA. Functionally, responsible for synthesis of pseudouridine from uracil-55 in the psi GC loop of transfer RNAs. The protein is tRNA pseudouridine synthase B of Prochlorococcus marinus subsp. pastoris (strain CCMP1986 / NIES-2087 / MED4).